A 413-amino-acid polypeptide reads, in one-letter code: Eukaryotic initiation factor 4A-7 (413 aa).

Residues 40–68 carry the Q motif motif; that stretch reads DSFDAMGLQENLLRGIYAYGFEKPSAIQQ. Positions 71–241 constitute a Helicase ATP-binding domain; that stretch reads IVPFCKGLDV…RKFMNKPVRI (171 aa). 84 to 91 provides a ligand contact to ATP; the sequence is AQSGTGKT. The DEAD box signature appears at 189 to 192; sequence DEAD. The region spanning 252–413 is the Helicase C-terminal domain; the sequence is GIKQFYVNVD…ELPANVADLL (162 aa).

This sequence belongs to the DEAD box helicase family. eIF4A subfamily. EIF4F is a multi-subunit complex, the composition of which varies with external and internal environmental conditions. It is composed of at least EIF4A, EIF4E and EIF4G.

It carries out the reaction ATP + H2O = ADP + phosphate + H(+). Functionally, ATP-dependent RNA helicase which is a subunit of the eIF4F complex involved in cap recognition and is required for mRNA binding to ribosome. In the current model of translation initiation, eIF4A unwinds RNA secondary structures in the 5'-UTR of mRNAs which is necessary to allow efficient binding of the small ribosomal subunit, and subsequent scanning for the initiator codon. This Nicotiana tabacum (Common tobacco) protein is Eukaryotic initiation factor 4A-7.